The primary structure comprises 310 residues: ADP-L-glycero-D-manno-heptose-6-epimerase (310 aa).

NADP(+) is bound by residues 10–11 (FI), 31–32 (DN), Lys-38, Lys-53, 75–79 (EGACS), and Asn-92. The active-site Proton acceptor is the Tyr-140. Lys-144 serves as a coordination point for NADP(+). Asn-169 lines the substrate pocket. NADP(+)-binding residues include Val-170 and Lys-178. Lys-178 serves as the catalytic Proton acceptor. Residues Ser-180, His-187, 201-204 (FSGS), Arg-209, and Tyr-272 each bind substrate.

It belongs to the NAD(P)-dependent epimerase/dehydratase family. HldD subfamily. Homopentamer. NADP(+) is required as a cofactor.

The enzyme catalyses ADP-D-glycero-beta-D-manno-heptose = ADP-L-glycero-beta-D-manno-heptose. It participates in nucleotide-sugar biosynthesis; ADP-L-glycero-beta-D-manno-heptose biosynthesis; ADP-L-glycero-beta-D-manno-heptose from D-glycero-beta-D-manno-heptose 7-phosphate: step 4/4. Catalyzes the interconversion between ADP-D-glycero-beta-D-manno-heptose and ADP-L-glycero-beta-D-manno-heptose via an epimerization at carbon 6 of the heptose. In Pectobacterium atrosepticum (strain SCRI 1043 / ATCC BAA-672) (Erwinia carotovora subsp. atroseptica), this protein is ADP-L-glycero-D-manno-heptose-6-epimerase.